The chain runs to 261 residues: Thioesterase AMT4 (261 aa).

Belongs to the AMT4 thioesterase family.

Its pathway is mycotoxin biosynthesis. Functionally, thioesterase; part of the gene clusters that mediate the biosynthesis of AM-toxins, host-selective toxins (HSTs) causing Alternaria blotch on apple, a worldwide distributed disease. AM-toxins are cyclic depsipeptides containing the 3 residues 2-hydroxy-isovaleric acid (2-HIV), dehydroalanine, L-alanine which are common for all 3 AM-toxins I to III. The fourth precursor is L-alpha-amino-methoxyphenyl-valeric acid (L-Amv) for AM-toxin I, L-alpha-amino-phenyl-valeric acid (L-Apv) for AM-toxin II, and L-alpha-amino-hydroxyphenyl-valeric acid (L-Ahv) for AM-toxin III. AM-toxins have two target sites for affecting susceptible apple cells; they cause invagination of the plasma membrane and electrolyte loss and chloroplast disorganization. The non-ribosomal peptide synthetase AMT1 contains 4 catalytic modules and is responsible for activation of each residue in AM-toxin. The aldo-keto reductase AMT2 catalyzes the conversion of 2-keto-isovaleric acid (2-KIV) to 2-hydroxy-isovaleric acid (2-HIV), one of the precursor residues incorporated by AMT1 during AM-toxin biosynthesis, by reduction of its ketone to an alcohol. The cytochrome P450 monooxygenase AMT3 and the thioesterase AMT4 are also important for AM-toxin production, but their exact function within the AM-toxin biosynthesis are not known yet. Up to 21 proteins (including AMT1 to AMT4) are predicted to be involved in AM-toxin biosynthesis since their expression ishighly up-regulated in AM-toxin-producing cultures. This Alternaria alternata (Alternaria rot fungus) protein is Thioesterase AMT4.